The sequence spans 249 residues: 3-deoxy-manno-octulosonate cytidylyltransferase (249 aa).

This sequence belongs to the KdsB family.

The protein localises to the cytoplasm. The enzyme catalyses 3-deoxy-alpha-D-manno-oct-2-ulosonate + CTP = CMP-3-deoxy-beta-D-manno-octulosonate + diphosphate. The protein operates within nucleotide-sugar biosynthesis; CMP-3-deoxy-D-manno-octulosonate biosynthesis; CMP-3-deoxy-D-manno-octulosonate from 3-deoxy-D-manno-octulosonate and CTP: step 1/1. It participates in bacterial outer membrane biogenesis; lipopolysaccharide biosynthesis. Activates KDO (a required 8-carbon sugar) for incorporation into bacterial lipopolysaccharide in Gram-negative bacteria. The chain is 3-deoxy-manno-octulosonate cytidylyltransferase from Oleidesulfovibrio alaskensis (strain ATCC BAA-1058 / DSM 17464 / G20) (Desulfovibrio alaskensis).